We begin with the raw amino-acid sequence, 37 residues long: Large ribosomal subunit protein bL36 (37 aa).

This sequence belongs to the bacterial ribosomal protein bL36 family.

The chain is Large ribosomal subunit protein bL36 from Nitratidesulfovibrio vulgaris (strain ATCC 29579 / DSM 644 / CCUG 34227 / NCIMB 8303 / VKM B-1760 / Hildenborough) (Desulfovibrio vulgaris).